We begin with the raw amino-acid sequence, 127 residues long: Longitudinals lacking protein-like (127 aa).

One can recognise a BTB domain in the interval 33–98 (TDVTLACEGQ…MYAGEVNVSQ (66 aa)).

In terms of assembly, the BTB domain interacts with the BTB domain of Trl in vitro. Found in a Pc-containing complex.

The protein resides in the nucleus. In terms of biological role, required, together with Trl, for maintaining the repressed state of target genes including homeotic genes Scr and Ubx. May also be involved in the activation of homeotic genes. Binds to a DNA Polycomb response element (PRE) at the bithorax complex. Also binds to polytene chromosomes at several hundred sites, many of which are shared with Trl and ph-p. Required during embryonic development. The protein is Longitudinals lacking protein-like of Drosophila melanogaster (Fruit fly).